The following is a 30-amino-acid chain: Hementerin (30 aa).

Ca(2+) is required as a cofactor.

It localises to the secreted. With respect to regulation, fibrino(geno)lytic activity inhibited by EDTA but not by PMSF, E-64, 6-AHA and aprotinin. Functionally, cleaves fibrinogen Aalpha (FGA), gamma (FGG) and Bbeta (FGB) chains. Degrades cross-linked fibrin. Has no amidolytic, plasminogenolytic or caseinolytic activity. Inhibits platelet aggregation induced by collagen (IC(50)=7.5ug/ml) and various other agonists, presumably via activation of a nitridergic pathway. Inhibition is accompanied by reduced ATP release from and surface expression of SELP and CD63 on platelets as well as increased intracellular levels of Ca(2+), cGMP and nitric oxide synthase activity. The protein is Hementerin of Haementeria depressa (Leech).